We begin with the raw amino-acid sequence, 292 residues long: Elongation factor Ts (292 aa).

The segment at Thr82 to Val85 is involved in Mg(2+) ion dislocation from EF-Tu.

This sequence belongs to the EF-Ts family.

It is found in the cytoplasm. Associates with the EF-Tu.GDP complex and induces the exchange of GDP to GTP. It remains bound to the aminoacyl-tRNA.EF-Tu.GTP complex up to the GTP hydrolysis stage on the ribosome. The protein is Elongation factor Ts of Legionella pneumophila (strain Lens).